A 197-amino-acid chain; its full sequence is Recombination protein RecR (197 aa).

A C4-type zinc finger spans residues 57–72 (CSTCFGITESDPCHLC). Residues 79–174 (ASICVVEEPQ…KVTRLAHGIP (96 aa)) form the Toprim domain.

This sequence belongs to the RecR family.

Functionally, may play a role in DNA repair. It seems to be involved in an RecBC-independent recombinational process of DNA repair. It may act with RecF and RecO. The protein is Recombination protein RecR of Geotalea uraniireducens (strain Rf4) (Geobacter uraniireducens).